A 203-amino-acid chain; its full sequence is Glycerol-3-phosphate acyltransferase (203 aa).

5 helical membrane passes run Thr-13–Thr-33, Thr-66–Val-86, Ala-88–Phe-108, Ile-118–Ala-138, and Ile-156–Met-176.

It belongs to the PlsY family. In terms of assembly, probably interacts with PlsX.

It localises to the cell inner membrane. It carries out the reaction an acyl phosphate + sn-glycerol 3-phosphate = a 1-acyl-sn-glycero-3-phosphate + phosphate. It participates in lipid metabolism; phospholipid metabolism. Its function is as follows. Catalyzes the transfer of an acyl group from acyl-phosphate (acyl-PO(4)) to glycerol-3-phosphate (G3P) to form lysophosphatidic acid (LPA). This enzyme utilizes acyl-phosphate as fatty acyl donor, but not acyl-CoA or acyl-ACP. In Sinorhizobium medicae (strain WSM419) (Ensifer medicae), this protein is Glycerol-3-phosphate acyltransferase.